We begin with the raw amino-acid sequence, 218 residues long: Ribose-5-phosphate isomerase A (218 aa).

Substrate-binding positions include 28 to 31 (TGST), 81 to 84 (DGAD), and 94 to 97 (KGGG). E103 acts as the Proton acceptor in catalysis. A substrate-binding site is contributed by K121.

The protein belongs to the ribose 5-phosphate isomerase family. As to quaternary structure, homodimer.

The enzyme catalyses aldehydo-D-ribose 5-phosphate = D-ribulose 5-phosphate. The protein operates within carbohydrate degradation; pentose phosphate pathway; D-ribose 5-phosphate from D-ribulose 5-phosphate (non-oxidative stage): step 1/1. Functionally, catalyzes the reversible conversion of ribose-5-phosphate to ribulose 5-phosphate. This Vibrio atlanticus (strain LGP32) (Vibrio splendidus (strain Mel32)) protein is Ribose-5-phosphate isomerase A.